We begin with the raw amino-acid sequence, 307 residues long: Agmatinase (307 aa).

The Mn(2+) site is built by H126, D149, H151, D153, D230, and D232.

Belongs to the arginase family. Agmatinase subfamily. It depends on Mn(2+) as a cofactor.

It carries out the reaction agmatine + H2O = urea + putrescine. It participates in amine and polyamine biosynthesis; putrescine biosynthesis via agmatine pathway; putrescine from agmatine: step 1/1. In terms of biological role, catalyzes the formation of putrescine from agmatine. The protein is Agmatinase of Sodalis glossinidius (strain morsitans).